A 309-amino-acid polypeptide reads, in one-letter code: MDDKAFTKELDQWVEQLNECKQLNENQVRTLCEKAKEILTKESNVQEVRCPVTVCGDVHGQFHDLMELFRIGGKSPDTNYLFMGDYVDRGYYSVETVTLLVALKVRYPERITILRGNHESRQITQVYGFYDECLRKYGNANVWKYFTDLFDYLPLTALVDGQIFCLHGGLSPSIDTLDHIRALDRLQEVPHEGPMCDLLWSDPDDRGGWGISPRGAGYTFGQDISETFNHANGLTLVSRAHQLVMEGYNWCHDRNVVTIFSAPNYCYRCGNQAAIMELDDTLKYSFLQFDPAPRRGEPHVTRRTPDYFL.

The Mn(2+) site is built by aspartate 57, histidine 59, aspartate 85, and asparagine 117. Histidine 118 (proton donor) is an active-site residue. The Mn(2+) site is built by histidine 167 and histidine 241. Tyrosine 307 carries the post-translational modification Phosphotyrosine. Leucine methyl ester is present on leucine 309.

Belongs to the PPP phosphatase family. PP-1 subfamily. In terms of assembly, PP2A consists of a common heterodimeric core enzyme (composed of a 36 kDa catalytic subunit (subunit C) and a 65 kDa constant regulatory subunit (PR65) (subunit A)) that associates with a variety of regulatory subunits. Proteins that associate with the core dimer include three families of regulatory subunits B (the R2/B/PR55/B55, R3/B''/PR72/PR130/PR59 and R5/B'/B56 families), the 48 kDa variable regulatory subunit, viral proteins, and cell signaling molecules. Binds PPME1. May indirectly interact with SGO1, most probably through regulatory B56 subunits. Interacts with CTTNBP2NL. Interacts with PTPA. Found in a complex with at least ARL2, PPP2CB, PPP2R1A, PPP2R2A, PPP2R5E and TBCD. Interacts with TBCD. Part of the core of STRIPAK complexes composed of PP2A catalytic and scaffolding subunits, the striatins (PP2A regulatory subunits), the striatin-associated proteins MOB4, STRIP1 and STRIP2, PDCD10 and members of the STE20 kinases, such as STK24 and STK26. The cofactor is Mn(2+). Reversibly methyl esterified on Leu-309 by leucine carboxyl methyltransferase 1 (Lcmt1) and protein phosphatase methylesterase 1 (Ppme1). Carboxyl methylation influences the affinity of the catalytic subunit for the different regulatory subunits, thereby modulating the PP2A holoenzyme's substrate specificity, enzyme activity and cellular localization. In terms of processing, phosphorylation of either threonine (by autophosphorylation-activated protein kinase) or tyrosine results in inactivation of the phosphatase. Auto-dephosphorylation has been suggested as a mechanism for reactivation. Post-translationally, may be monoubiquitinated by NOSIP.

It is found in the cytoplasm. Its subcellular location is the nucleus. It localises to the chromosome. The protein resides in the centromere. The protein localises to the cytoskeleton. It is found in the spindle pole. The enzyme catalyses O-phospho-L-seryl-[protein] + H2O = L-seryl-[protein] + phosphate. It carries out the reaction O-phospho-L-threonyl-[protein] + H2O = L-threonyl-[protein] + phosphate. Its function is as follows. Catalytic subunit of protein phosphatase 2A (PP2A), a serine/threonine phosphatase involved in the regulation of a wide variety of enzymes, signal transduction pathways, and cellular events. PP2A can modulate the activity of phosphorylase B kinase, casein kinase 2, mitogen-stimulated S6 kinase, and MAP-2 kinase. Part of the striatin-interacting phosphatase and kinase (STRIPAK) complexes. STRIPAK complexes have critical roles in protein (de)phosphorylation and are regulators of multiple signaling pathways including Hippo, MAPK, nuclear receptor and cytoskeleton remodeling. Different types of STRIPAK complexes are involved in a variety of biological processes such as cell growth, differentiation, apoptosis, metabolism and immune regulation. The protein is Serine/threonine-protein phosphatase 2A catalytic subunit beta isoform (Ppp2cb) of Mus musculus (Mouse).